A 624-amino-acid polypeptide reads, in one-letter code: MSQPHSVPNTRALALGALGVVFGDIGTSPLYTMKEVFGGHHLALTQDNVLGILSLIFWALILVVSLKYVLVIMRADNKGEGGILALLSLVQGQAPLRSRARWIIMSLGFLGASLFFGDSLITPAISVLSAVEGLEIGAPALHPFILPLALGILVGLFAIQRRGTASIGRLFGPIMLLWFAVLGVLGAIGIAKHPQVLAALLPIHAIQFFMTHGTAGFLILGAVVLAITGAEALYADMGHFGTRPIRLTWFGFVLPALVVNYFGQGALLLAEPAAVRNPFYMLAPDWALYPMVALATAATVIASQAVISGAFSVTRQVVQMGYAPRLVIRHTSATAAGQIYIPFVNWTLAAGVALLVLGFQSSSNLAAAYGIAVTATFAIDTVLLALLMRVNWNLGRAPTLVAAALFLTLDLAFFGANAVKIPEGGWFPLVVAVVVFTILVTWRRGREIVGARLHERGLPLAPFVESLLAHPPARVGGTAVFMTTDPSGVPLALLHNLKHNKVLHERVVILNVRYGEVPYVPAEHRLAVTKLGEGVFHVVVRYGFMDDVDIPKALAECPCGMDFDMMDTTFFLSRENLIPARGDGGMMVWREHLFATMARNAASPMTFFRIPPNRVVELGAQLEI.

The next 12 membrane-spanning stretches (helical) occupy residues 13-33 (LALGALGVVFGDIGTSPLYTM), 52-72 (ILSLIFWALILVVSLKYVLVI), 102-122 (WIIMSLGFLGASLFFGDSLIT), 139-159 (PALHPFILPLALGILVGLFAI), 170-190 (LFGPIMLLWFAVLGVLGAIGI), 208-228 (FFMTHGTAGFLILGAVVLAIT), 249-269 (WFGFVLPALVVNYFGQGALLL), 291-311 (MVALATAATVIASQAVISGAF), 339-359 (IYIPFVNWTLAAGVALLVLGF), 368-388 (AYGIAVTATFAIDTVLLALLM), 399-419 (TLVAAALFLTLDLAFFGANAV), and 421-441 (IPEGGWFPLVVAVVVFTILVT).

The protein belongs to the HAK/KUP transporter (TC 2.A.72) family.

Its subcellular location is the cell inner membrane. It catalyses the reaction K(+)(in) + H(+)(in) = K(+)(out) + H(+)(out). Functionally, transport of potassium into the cell. Likely operates as a K(+):H(+) symporter. This is Probable potassium transport system protein Kup from Thiobacillus denitrificans (strain ATCC 25259 / T1).